Here is a 95-residue protein sequence, read N- to C-terminus: Co-chaperonin GroES (95 aa).

Belongs to the GroES chaperonin family. In terms of assembly, heptamer of 7 subunits arranged in a ring. Interacts with the chaperonin GroEL.

The protein localises to the cytoplasm. Functionally, together with the chaperonin GroEL, plays an essential role in assisting protein folding. The GroEL-GroES system forms a nano-cage that allows encapsulation of the non-native substrate proteins and provides a physical environment optimized to promote and accelerate protein folding. GroES binds to the apical surface of the GroEL ring, thereby capping the opening of the GroEL channel. The chain is Co-chaperonin GroES from Rickettsia rickettsii (strain Sheila Smith).